The following is a 280-amino-acid chain: Ribosomal RNA-processing protein 7 homolog A (280 aa).

The span at 1–10 (MVSRRKKRKA) shows a compositional bias: basic residues. Residues 1–24 (MVSRRKKRKAGGHEESIPSPPGYS) are disordered. Positions 59–159 (RTLFILNVPP…SGIHKWISDY (101 aa)) constitute an RRM domain. Serine 99 is subject to Phosphoserine.

The protein belongs to the RRP7 family. Part of the small subunit (SSU) processome, composed of more than 70 proteins and the RNA chaperone small nucleolar RNA (snoRNA) U3. Interacts with NOL6; required for NOL6 localization to nucleolus.

Its subcellular location is the nucleus. The protein localises to the nucleolus. The protein resides in the cell projection. It localises to the cilium. It is found in the cytoplasm. Its subcellular location is the cytoskeleton. The protein localises to the microtubule organizing center. The protein resides in the centrosome. Functionally, nucleolar protein that is involved in ribosomal RNA (rRNA) processing. Also plays a role in primary cilia resorption, and cell cycle progression in neurogenesis and neocortex development. Part of the small subunit (SSU) processome, first precursor of the small eukaryotic ribosomal subunit. During the assembly of the SSU processome in the nucleolus, many ribosome biogenesis factors, an RNA chaperone and ribosomal proteins associate with the nascent pre-rRNA and work in concert to generate RNA folding, modifications, rearrangements and cleavage as well as targeted degradation of pre-ribosomal RNA by the RNA exosome. The polypeptide is Ribosomal RNA-processing protein 7 homolog A (Rrp7a) (Mus musculus (Mouse)).